Here is a 199-residue protein sequence, read N- to C-terminus: Putative HMP/thiamine permease protein YkoE (199 aa).

6 helical membrane-spanning segments follow: residues 9–29, 40–60, 63–83, 85–105, 114–134, and 143–163; these read IVIMSVISIVFAVVYLLFTHF, IAYEPIYGIWFIVSVIAAYMI, PGAALVSEIIAALVECLLGNP, GPMVIVIGIVQGLGAEAVFLA, PVLMLAGMGSSVASFIYDLFV, and GYLLIMLVIRLISGALLAGLL.

As to quaternary structure, the complex is composed of two ATP-binding proteins (YkoD), two transmembrane proteins (YkoC and YkoE) and a solute-binding protein (YkoF).

The protein localises to the cell membrane. In terms of biological role, part of the ABC transporter complex YkoCDEF that could transport hydroxymethylpyrimidine (HMP) and/or thiamine. Could also transport other HMP-containing products. Probably responsible for the translocation of the substrate across the membrane. In Bacillus subtilis (strain 168), this protein is Putative HMP/thiamine permease protein YkoE (ykoE).